We begin with the raw amino-acid sequence, 427 residues long: Enolase (427 aa).

Residue Gln163 participates in (2R)-2-phosphoglycerate binding. The Proton donor role is filled by Glu205. Residues Asp242, Glu285, and Asp312 each coordinate Mg(2+). Residues Lys337, Arg366, Ser367, and Lys388 each coordinate (2R)-2-phosphoglycerate. Catalysis depends on Lys337, which acts as the Proton acceptor.

It belongs to the enolase family. Mg(2+) serves as cofactor.

The protein resides in the cytoplasm. It is found in the secreted. Its subcellular location is the cell surface. The enzyme catalyses (2R)-2-phosphoglycerate = phosphoenolpyruvate + H2O. It participates in carbohydrate degradation; glycolysis; pyruvate from D-glyceraldehyde 3-phosphate: step 4/5. Functionally, catalyzes the reversible conversion of 2-phosphoglycerate (2-PG) into phosphoenolpyruvate (PEP). It is essential for the degradation of carbohydrates via glycolysis. The sequence is that of Enolase from Azorhizobium caulinodans (strain ATCC 43989 / DSM 5975 / JCM 20966 / LMG 6465 / NBRC 14845 / NCIMB 13405 / ORS 571).